The primary structure comprises 372 residues: Glutamate 5-kinase (372 aa).

ATP is bound at residue K14. Substrate is bound by residues S55, D142, and N154. Residues 174–175 and 216–222 each bind ATP; these read SD and TGGMETK. One can recognise a PUA domain in the interval 279 to 357; that stretch reads QGSIIVDLGA…WEIADVLGHK (79 aa).

Belongs to the glutamate 5-kinase family.

The protein localises to the cytoplasm. The catalysed reaction is L-glutamate + ATP = L-glutamyl 5-phosphate + ADP. Its pathway is amino-acid biosynthesis; L-proline biosynthesis; L-glutamate 5-semialdehyde from L-glutamate: step 1/2. Catalyzes the transfer of a phosphate group to glutamate to form L-glutamate 5-phosphate. This Carboxydothermus hydrogenoformans (strain ATCC BAA-161 / DSM 6008 / Z-2901) protein is Glutamate 5-kinase.